A 240-amino-acid chain; its full sequence is Poxin (240 aa).

The Proton donor role is filled by histidine 46. Tyrosine 181 serves as the catalytic Shared with catalytic histidine of dimeric partner. Lysine 185 serves as the catalytic Proton acceptor; shared with catalytic histidine of dimeric partner.

Belongs to the poxin family. Homodimer.

The catalysed reaction is 2',3'-cGAMP + H2O = Gp(2'-5')Ap(3') + H(+). Functionally, nuclease that cleaves host 2',3'-cGAMP. This Lepidoptera (butterflies and moths) protein is Poxin (P26).